Reading from the N-terminus, the 305-residue chain is tRNA pseudouridine synthase B (305 aa).

The Nucleophile role is filled by Asp48.

Belongs to the pseudouridine synthase TruB family. Type 1 subfamily.

It carries out the reaction uridine(55) in tRNA = pseudouridine(55) in tRNA. In terms of biological role, responsible for synthesis of pseudouridine from uracil-55 in the psi GC loop of transfer RNAs. The chain is tRNA pseudouridine synthase B from Pseudomonas fluorescens (strain Pf0-1).